The chain runs to 136 residues: MLAPKKQKFRKAHKGRVASIAKAGTTLAFGSFGLKSIDGWRVTARQIEAGRKAATRCMKRQGRLWIRIFPDVPVSKKPAEVRMGKGKGSPEFFAVRVSPGRIMFEIEGVEENVALRALELVSAKLPVRTRIVRRYE.

The protein belongs to the universal ribosomal protein uL16 family. In terms of assembly, part of the 50S ribosomal subunit.

Binds 23S rRNA and is also seen to make contacts with the A and possibly P site tRNAs. The chain is Large ribosomal subunit protein uL16 from Rickettsia africae (strain ESF-5).